We begin with the raw amino-acid sequence, 919 residues long: Leucine--tRNA ligase (919 aa).

The 'HIGH' region signature appears at 83–93; it reads PYPSGKLHMGH. The 'KMSKS' region motif lies at 670-674; the sequence is KMSKS. An ATP-binding site is contributed by Lys-673.

This sequence belongs to the class-I aminoacyl-tRNA synthetase family.

It localises to the cytoplasm. It carries out the reaction tRNA(Leu) + L-leucine + ATP = L-leucyl-tRNA(Leu) + AMP + diphosphate. The polypeptide is Leucine--tRNA ligase (Psychrobacter cryohalolentis (strain ATCC BAA-1226 / DSM 17306 / VKM B-2378 / K5)).